We begin with the raw amino-acid sequence, 185 residues long: Lipid A acyltransferase PagP (185 aa).

The signal sequence occupies residues Met-1–Gly-14. Residue Cys-15 is the site of N-palmitoyl cysteine attachment. Cys-15 carries S-diacylglycerol cysteine lipidation. Catalysis depends on residues His-57, Asp-100, and Ser-101.

This sequence belongs to the lipid A palmitoyltransferase family. In terms of assembly, homodimer.

The protein resides in the cell outer membrane. It catalyses the reaction a lipid A + a 1,2-diacyl-sn-glycero-3-phosphocholine = a hepta-acyl lipid A + a 2-acyl-sn-glycero-3-phosphocholine. The catalysed reaction is a lipid IVA + a 1,2-diacyl-sn-glycero-3-phosphocholine = a lipid IVB + a 2-acyl-sn-glycero-3-phosphocholine. The enzyme catalyses a lipid IIA + a 1,2-diacyl-sn-glycero-3-phosphocholine = a lipid IIB + a 2-acyl-sn-glycero-3-phosphocholine. In terms of biological role, transfers a fatty acid residue from the sn-1 position of a phospholipid to the N-linked hydroxyfatty acid chain on the proximal unit of lipid A or its precursors. This Erwinia sp. (strain Ejp617) protein is Lipid A acyltransferase PagP.